A 296-amino-acid polypeptide reads, in one-letter code: Probable DNA-directed RNA polymerase III subunit RPC6 (296 aa).

This sequence belongs to the eukaryotic RPC34/RPC39 RNA polymerase subunit family.

It is found in the nucleus. Its function is as follows. DNA-dependent RNA polymerase catalyzes the transcription of DNA into RNA using the four ribonucleoside triphosphates as substrates. Specific peripheric component of RNA polymerase III which synthesizes small RNAs, such as 5S rRNA and tRNAs. This chain is Probable DNA-directed RNA polymerase III subunit RPC6, found in Caenorhabditis elegans.